Consider the following 188-residue polypeptide: Protease-associated domain-containing protein 1 (188 aa).

Residues 1-21 (MSRGAAGWCCLVLWLPTCVAA) form the signal peptide. Residues 83–163 (IQDQIALVER…RSLEQHGLPW (81 aa)) enclose the PA domain. Residues Asn121 and Asn171 are each glycosylated (N-linked (GlcNAc...) asparagine).

In terms of processing, N-glycosylated; required for efficient secretion. In terms of tissue distribution, expressed in metabolically active tissues such as liver, muscle, adipose, and heart and different brain regions like cortex and hypothalamus, expression is acutely regulated by the nutritional state.

The protein localises to the secreted. Functionally, plays a role in the modulation of physical activity and adiposity. The chain is Protease-associated domain-containing protein 1 from Mus musculus (Mouse).